The sequence spans 390 residues: MTQKIIIFDTTLRDGEQSLKMSLSVKKKLKIAFALEKLGVDVIEAGFPISSPGDFESVKKISERIKDAKICSLARCIDGDIDIAAKAMKKANSFRIHIFLGTSALHVQSKLKKTFDQIIDMMVSSVKRAQKYTDDVEFSCEDAGRTSLDDLCRIIELAIDLGVKTINIPDTVGYTIPYEFSNIISSIYKKVPNIDKAIISVHCHDDLGMAVANSISAIQVGARQIEGTITGVGERAGNAALEEILMAIKIRKDILNFKTNIKYQEIYSTCRVISSICNIPVPVNKAIIGSNAFSHSSGIHQDGILKDKKTYEIIVPESIGFVSQPLNLTSRSGRAAVKYRMKKIGYKDSDYNIDILYSRFLKLADKKGRVSDSDLKQLVCFNNKLKNLKD.

The 263-residue stretch at 5 to 267 folds into the Pyruvate carboxyltransferase domain; that stretch reads IIIFDTTLRD…KTNIKYQEIY (263 aa). The Mn(2+) site is built by D14, H202, H204, and N238.

It belongs to the alpha-IPM synthase/homocitrate synthase family. LeuA type 1 subfamily. In terms of assembly, homodimer. Requires Mn(2+) as cofactor.

Its subcellular location is the cytoplasm. The catalysed reaction is 3-methyl-2-oxobutanoate + acetyl-CoA + H2O = (2S)-2-isopropylmalate + CoA + H(+). The protein operates within amino-acid biosynthesis; L-leucine biosynthesis; L-leucine from 3-methyl-2-oxobutanoate: step 1/4. Catalyzes the condensation of the acetyl group of acetyl-CoA with 3-methyl-2-oxobutanoate (2-ketoisovalerate) to form 3-carboxy-3-hydroxy-4-methylpentanoate (2-isopropylmalate). The chain is Putative 2-isopropylmalate synthase from Buchnera aphidicola subsp. Baizongia pistaciae (strain Bp).